Reading from the N-terminus, the 808-residue chain is Protein SQS1 (808 aa).

Basic residues-rich tracts occupy residues 1-20 (MAKR…KRGG) and 28-37 (RGSKRGRGGR). Disordered regions lie at residues 1-67 (MAKR…GDLS), 151-180 (RSKN…DMEI), and 485-529 (ETPP…EELG). Composition is skewed to basic and acidic residues over residues 39–48 (RGFEETERSA) and 153–179 (KNQE…KDME). The region spanning 621–683 (GFHVQNIRDE…HTHIMVEKVK (63 aa)) is the R3H domain. Positions 748 to 795 (QDNIGRRMLEKLGWSSGEGLGAHGNKGISIPVMARVKKSKSGLRHSKE) constitute a G-patch domain. Positions 764-808 (GEGLGAHGNKGISIPVMARVKKSKSGLRHSKEDEDTGRSSSFRKK) are disordered. The segment covering 782–791 (RVKKSKSGLR) has biased composition (basic residues).

This sequence belongs to the SQS1 family.

It localises to the cytoplasm. The protein localises to the nucleus. In terms of biological role, may be involved in splicing. The protein is Protein SQS1 (SQS1) of Candida glabrata (strain ATCC 2001 / BCRC 20586 / JCM 3761 / NBRC 0622 / NRRL Y-65 / CBS 138) (Yeast).